Reading from the N-terminus, the 315-residue chain is Type II restriction enzyme AvaI (315 aa).

The enzyme catalyses Endonucleolytic cleavage of DNA to give specific double-stranded fragments with terminal 5'-phosphates.. Its function is as follows. A P subtype restriction enzyme that recognizes the double-stranded sequence 5'-CYCGRG-3' and cleaves after C-1. The chain is Type II restriction enzyme AvaI from Anabaena variabilis.